The chain runs to 951 residues: Plasma membrane ATPase (951 aa).

The next 4 membrane-spanning stretches (helical) occupy residues 61–81, 93–113, 243–263, and 277–297; these read FLGF…IMAI, WEDF…SFIE, IGNF…IVMF, and LLVL…SVTM. The active-site 4-aspartylphosphate intermediate is the D329. Mg(2+) is bound by residues D588 and D592. Helical transmembrane passes span 647–667, 671–691, 709–729, 752–772, 785–805, and 814–834; these read IYAV…ALIW, FSPF…MTIS, IFAT…IFFW, EMMS…IFVT, LLLV…AVYA, and GIGW…YFPL.

This sequence belongs to the cation transport ATPase (P-type) (TC 3.A.3) family. Type IIIA subfamily.

The protein resides in the cell membrane. It catalyses the reaction ATP + H2O + H(+)(in) = ADP + phosphate + 2 H(+)(out). In terms of biological role, the plasma membrane ATPase of plants and fungi is a hydrogen ion pump. The proton gradient it generates drives the active transport of nutrients by H(+)-symport. The resulting external acidification and/or internal alkinization may mediate growth responses. This is Plasma membrane ATPase from Oryza sativa subsp. japonica (Rice).